The chain runs to 428 residues: Ammonium transporter AmtB (428 aa).

A signal peptide spans 1 to 22; that stretch reads MKIATIKTGLASLAMLPGLVMA. Topologically, residues 23-32 are periplasmic; sequence APAVADKADN. The chain crosses the membrane as a helical span at residues 33–54; sequence AFMMICTALVLFMTIPGIALFY. Topologically, residues 55–65 are cytoplasmic; the sequence is GGLIRGKNVLS. The helical transmembrane segment at 66–90 threads the bilayer; that stretch reads MLTQVTVTFALVCILWVVYGYSLAF. The Periplasmic segment spans residues 91-119; that stretch reads GEGNNFFGNINWLMLKNIELTAVMGSIYQ. A helical transmembrane segment spans residues 120–142; that stretch reads YIHVAFQGSFACITVGLIVGALA. Residues 143–146 lie on the Cytoplasmic side of the membrane; the sequence is ERIR. Residues 147-171 form a helical membrane-spanning segment; the sequence is FSAVLIFVVVWLTLSYIPIAHMVWG. Over 172-185 the chain is Periplasmic; sequence GGLLASHGALDFAG. The chain crosses the membrane as a helical span at residues 186–201; sequence GTVVHINAAIAGLVGA. Topologically, residues 202–221 are cytoplasmic; sequence YLIGKRVGFGKEAFKPHNLP. Residues 222–241 traverse the membrane as a helical segment; the sequence is MVFTGTAILYIGWFGFNAGS. Serine 241 lines the NH4(+) pocket. Residues 242-248 lie on the Periplasmic side of the membrane; the sequence is AGTANEI. Residues 249 to 273 form a helical membrane-spanning segment; that stretch reads AALAFVNTVVATAAAILGWIFGEWA. Residues 274–279 lie on the Cytoplasmic side of the membrane; sequence LRGKPS. The chain crosses the membrane as a helical span at residues 280–300; that stretch reads LLGACSGAIAGLVGVTPACGY. At 301–302 the chain is on the periplasmic side; sequence IG. A helical membrane pass occupies residues 303–321; sequence VGGALIIGVVAGLAGLWGV. At 322–333 the chain is on the cytoplasmic side; that stretch reads TMLKRLLRVDDP. The helical transmembrane segment at 334–355 threads the bilayer; that stretch reads CDVFGVHGVCGIVGCIMTGIFA. Topologically, residues 356 to 370 are periplasmic; sequence ASSLGGVGFAEGVTM. The chain crosses the membrane as a helical span at residues 371 to 399; that stretch reads GHQLLVQLESIAITIVWSGVVAFIGYKLA. At 400–428 the chain is on the cytoplasmic side; the sequence is DLTVGLRVPEEQEREGLDVNSHGENAYNA.

Belongs to the ammonia transporter channel (TC 1.A.11.2) family. In terms of assembly, homotrimer. In response to elevation of the extracellular ammonium concentration, interacts and forms a complex with GlnK.

Its subcellular location is the cell inner membrane. Its activity is regulated as follows. In the presence of high extracellular ammonium concentrations, transport activity is inhibited by interaction with the regulatory protein GlnK. Formation of the GlnK-AmtB complex is influenced by intracellular pools of the effector molecules ATP, ADP, Mg(2+) and 2-oxoglutarate. The GlnK-AmtB interaction is also controlled by the level of intracellular glutamine and the uridylylation status of GlnK. In terms of biological role, involved in the uptake of ammonium/ammonia (NH(4)(+)/NH(3)). Transport is electrogenic. Following sequestration of NH(4)(+) at the periplasmic face, NH(4)(+) is deprotonated and neutral NH(3) is transported into the cytoplasm. Neutral NH(3) and charged H(+) are carried separately across the membrane on a unique two-lane pathway, before recombining to NH(4)(+) inside the cell. In Escherichia coli O157:H7, this protein is Ammonium transporter AmtB (amtB).